Here is a 180-residue protein sequence, read N- to C-terminus: Probable chorismate pyruvate-lyase (180 aa).

3 residues coordinate substrate: arginine 73, leucine 111, and glutamate 170.

This sequence belongs to the UbiC family.

It is found in the cytoplasm. The catalysed reaction is chorismate = 4-hydroxybenzoate + pyruvate. The protein operates within cofactor biosynthesis; ubiquinone biosynthesis. Its function is as follows. Removes the pyruvyl group from chorismate, with concomitant aromatization of the ring, to provide 4-hydroxybenzoate (4HB) for the ubiquinone pathway. This is Probable chorismate pyruvate-lyase from Nitrosospira multiformis (strain ATCC 25196 / NCIMB 11849 / C 71).